A 239-amino-acid polypeptide reads, in one-letter code: Ribosomal RNA large subunit methyltransferase E (239 aa).

5 residues coordinate S-adenosyl-L-methionine: Gly88, Trp90, Asp111, Asp127, and Asp151. Catalysis depends on Lys191, which acts as the Proton acceptor.

This sequence belongs to the class I-like SAM-binding methyltransferase superfamily. RNA methyltransferase RlmE family.

The protein localises to the cytoplasm. The catalysed reaction is uridine(2552) in 23S rRNA + S-adenosyl-L-methionine = 2'-O-methyluridine(2552) in 23S rRNA + S-adenosyl-L-homocysteine + H(+). Functionally, specifically methylates the uridine in position 2552 of 23S rRNA at the 2'-O position of the ribose in the fully assembled 50S ribosomal subunit. This Bartonella bacilliformis (strain ATCC 35685 / KC583 / Herrer 020/F12,63) protein is Ribosomal RNA large subunit methyltransferase E.